The following is a 299-amino-acid chain: NADH-cytochrome b5 reductase 2 (299 aa).

Residues 13-35 form a helical membrane-spanning segment; that stretch reads SFKVLAPFAAAVGSVGIAYQYST. Positions 50 to 154 constitute an FAD-binding FR-type domain; the sequence is DEWIDLKLAK…KGPVVKWKWE (105 aa). An FAD-binding site is contributed by 157–192; sequence QYKSIALIGGGTGITPLYQLMHEITKNPEDKTKVNL.

Belongs to the flavoprotein pyridine nucleotide cytochrome reductase family. The cofactor is FAD.

The protein resides in the mitochondrion outer membrane. The enzyme catalyses 2 Fe(III)-[cytochrome b5] + NADH = 2 Fe(II)-[cytochrome b5] + NAD(+) + H(+). Its function is as follows. May mediate the reduction of outer membrane cytochrome b5. This is NADH-cytochrome b5 reductase 2 (MCR1) from Debaryomyces hansenii (strain ATCC 36239 / CBS 767 / BCRC 21394 / JCM 1990 / NBRC 0083 / IGC 2968) (Yeast).